Here is a 163-residue protein sequence, read N- to C-terminus: Nucleotide-binding protein YajQ (163 aa).

Belongs to the YajQ family.

In terms of biological role, nucleotide-binding protein. The protein is Nucleotide-binding protein YajQ of Salmonella agona (strain SL483).